Reading from the N-terminus, the 212-residue chain is Riboflavin kinase (212 aa).

Residues 1–83 (MTELYCERKT…NLLRYFDIAS (83 aa)) form a unknown region. Positions 84–212 (IKLVGRVVTG…GDRVELEVYL (129 aa)) are riboflavin kinase. 93 to 98 (GLGEGA) provides a ligand contact to CDP. Threonine 122 and asparagine 124 together coordinate Mg(2+). Residues threonine 179 and glutamate 187 each coordinate FMN. 192–195 (VRVR) lines the CDP pocket.

Belongs to the archaeal riboflavin kinase family. Mg(2+) serves as cofactor.

It catalyses the reaction riboflavin + CTP = CDP + FMN + H(+). The protein operates within cofactor biosynthesis; FMN biosynthesis; FMN from riboflavin (CTP route): step 1/1. Catalyzes the CTP-dependent phosphorylation of riboflavin (vitamin B2) to form flavin mononucleotide (FMN). This is Riboflavin kinase (ribK) from Pyrobaculum calidifontis (strain DSM 21063 / JCM 11548 / VA1).